The primary structure comprises 420 residues: MKTLIARHKAGEHIGICSVCSAHPLVIEAALAFDRNSTRKVLIEATSNQVNQFGGYTGMTPADFREFVFAIADKVGFARERIILGGDHLGPNCWQQENADAAMEKSVELVKAYVRAGFSKIHLDASMSCADDSIPLAPETVAERAAVLCLAAESVATDCQREQLNYVIGTEVPVPGGEASAIQSVHITQVEDAANTLRTHQKAFIARGLAEALTRVIAIVVQPGVEFDHSNIIHYQAQEAQALAQWIEKTKMVYEAHSTDYQTQTAYRELVRDHFAILKVGPALTFALREAIFALAQIEQELIAPENRSRCLAVIEDVMLDEPQYWKKYYRTGFNDSLLDIRYSLSDRIRYYWPHSRIKNSVETMMVNLEGVDIPLGMISQYLPKQFERIQSGELSAIPHQLIMDKIYDVLRAYRYGCAE.

This sequence belongs to the GatZ/KbaZ family. GatZ subfamily. In terms of assembly, forms a complex with GatY.

It participates in carbohydrate metabolism; D-tagatose 6-phosphate degradation; D-glyceraldehyde 3-phosphate and glycerone phosphate from D-tagatose 6-phosphate: step 2/2. Functionally, component of the tagatose-1,6-bisphosphate aldolase GatYZ that is required for full activity and stability of the Y subunit. Could have a chaperone-like function for the proper and stable folding of GatY. When expressed alone, GatZ does not show any aldolase activity. Is involved in the catabolism of galactitol. In Escherichia coli O6:K15:H31 (strain 536 / UPEC), this protein is D-tagatose-1,6-bisphosphate aldolase subunit GatZ.